The primary structure comprises 452 residues: tRNA modification GTPase MnmE (452 aa).

(6S)-5-formyl-5,6,7,8-tetrahydrofolate-binding residues include R22, E80, and K119. The TrmE-type G domain occupies 213-375 (GVRTVIVGKP…LENKIYEKFF (163 aa)). N223 serves as a coordination point for K(+). Residues 223-228 (NSGKST), 242-248 (TDIPGTT), and 267-270 (DTAG) contribute to the GTP site. Mg(2+) is bound at residue S227. Positions 242, 244, and 247 each coordinate K(+). T248 contacts Mg(2+). Residue K452 coordinates (6S)-5-formyl-5,6,7,8-tetrahydrofolate.

The protein belongs to the TRAFAC class TrmE-Era-EngA-EngB-Septin-like GTPase superfamily. TrmE GTPase family. Homodimer. Heterotetramer of two MnmE and two MnmG subunits. It depends on K(+) as a cofactor.

Its subcellular location is the cytoplasm. Exhibits a very high intrinsic GTPase hydrolysis rate. Involved in the addition of a carboxymethylaminomethyl (cmnm) group at the wobble position (U34) of certain tRNAs, forming tRNA-cmnm(5)s(2)U34. The polypeptide is tRNA modification GTPase MnmE (Petrotoga mobilis (strain DSM 10674 / SJ95)).